A 143-amino-acid polypeptide reads, in one-letter code: Large ribosomal subunit protein uL15 (143 aa).

The interval 1–54 is disordered; the sequence is MQLNSIKPAPGAKHPKRRVGRGIGSGLGKTAGRGHKGQKSRAGGFHKVGFEGGQ. Residues 21–31 are compositionally biased toward gly residues; that stretch reads RGIGSGLGKTA.

The protein belongs to the universal ribosomal protein uL15 family. Part of the 50S ribosomal subunit.

Functionally, binds to the 23S rRNA. The protein is Large ribosomal subunit protein uL15 of Nitrosospira multiformis (strain ATCC 25196 / NCIMB 11849 / C 71).